Consider the following 1029-residue polypeptide: Beta-galactosidase 2 (1029 aa).

The substrate site is built by Asn104 and Asp203. Asp203 provides a ligand contact to Na(+). Mg(2+) contacts are provided by Glu418, His420, and Glu463. Substrate contacts are provided by residues Glu463 and 539-542; that span reads EYAH. Catalysis depends on Glu463, which acts as the Proton donor. Catalysis depends on Glu539, which acts as the Nucleophile. Residue Asn599 coordinates Mg(2+). Phe603 and Asn606 together coordinate Na(+). Substrate-binding residues include Asn606 and Trp1004.

It belongs to the glycosyl hydrolase 2 family. As to quaternary structure, homotetramer. The cofactor is Mg(2+). Na(+) serves as cofactor.

It carries out the reaction Hydrolysis of terminal non-reducing beta-D-galactose residues in beta-D-galactosides.. The polypeptide is Beta-galactosidase 2 (Enterobacter cloacae).